A 245-amino-acid polypeptide reads, in one-letter code: Dehydrogenase/reductase SDR family member 6 (245 aa).

NAD(+)-binding positions include Gln16 to Ile18, Asp37, and Asp58. Arg144 contributes to the substrate binding site. The active-site Proton acceptor is Tyr147. NAD(+) is bound by residues Lys151 and Val180 to Ser184. Residues Arg188 and Arg205 each contribute to the substrate site.

It belongs to the short-chain dehydrogenases/reductases (SDR) family. Homotetramer.

It is found in the cytoplasm. It carries out the reaction cis-4-hydroxy-L-proline + NAD(+) = 4-oxo-L-proline + NADH + H(+). The enzyme catalyses (R)-3-hydroxybutanoate + NAD(+) = acetoacetate + NADH + H(+). Its pathway is amino-acid metabolism. The protein operates within siderophore biosynthesis. Its function is as follows. NAD(H)-dependent dehydrogenase/reductase with a preference for cyclic substrates. Catalyzes stereoselective conversion of 4-oxo-L-proline to cis-4-hydroxy-L-proline, likely a detoxification mechanism for ketoprolines. Mediates the formation of 2,5-dihydroxybenzoate (2,5-DHBA), a siderophore that chelates free cytoplasmic iron, thereby regulating iron transport and homeostasis while protecting cells against free radical-induced oxidative stress. The iron-siderophore complex is imported into mitochondria, providing an iron source for mitochondrial metabolic processes in particular heme synthesis. May act as a 3-hydroxybutyrate dehydrogenase. This chain is Dehydrogenase/reductase SDR family member 6 (bdh2), found in Aquarana catesbeiana (American bullfrog).